Reading from the N-terminus, the 714-residue chain is G protein-coupled receptor kinase 2 (714 aa).

Residues 1–308 are N-terminal; it reads MELENIVANT…LEAQPITYKT (308 aa). 2 RGS domains span residues 53-174 and 177-294; these read YGYV…SQHS and INHK…HRYL. The segment at 141-229 is disordered; the sequence is SNANPTETAE…GGGEGGGGGK (89 aa). The segment covering 154–175 has biased composition (low complexity); that stretch reads CNNTTANNCNNINNSNNSQHSS. Basic and acidic residues-rich tracts occupy residues 176–190 and 199–220; these read DINH…HNGD and HQDD…EKGG. Residues 309-574 form the Protein kinase domain; it reads FRMYRVLGKG…GQDVMAHPFF (266 aa). ATP is bound by residues 315–323 and Lys338; that span reads LGKGGFGEV. The active-site Proton acceptor is Asp435. The AGC-kinase C-terminal domain maps to 577–642; it reads TQLNWRRLEA…GSVSISWQNE (66 aa). Ser612 is subject to Phosphoserine. Thr613 carries the phosphothreonine modification. The disordered stretch occupies residues 667 to 714; it reads INAAPEPDKAGCFPFRRKKKQPARTQPIPIPEHLLTTSHSVSSTTVES. The segment covering 698–714 has biased composition (low complexity); the sequence is EHLLTTSHSVSSTTVES.

Belongs to the protein kinase superfamily. AGC Ser/Thr protein kinase family. GPRK subfamily. As to expression, expressed in all larval tissues and in adult ovaries. Larval CNS staining is localized to axons projecting to the optic lobes and the mushroom bodies, in the longitudinal connectives, and in cell bodies and nerves of the ring gland corpus allatum. Adult CNS staining is detectable only in cell bodies and processes associated with the ellipsoid body of the central complex and portions of the mushroom bodies. In the wing disk, expression is confined to a stripe that parallels the anterior/posterior boundary of the wing blade and the hinge region, and weak expression in the prospective notum.

The protein resides in the membrane. It carries out the reaction [G-protein-coupled receptor] + ATP = [G-protein-coupled receptor]-phosphate + ADP + H(+). Specifically phosphorylates the activated forms of G protein-coupled receptors. Required during oogenesis and embryogenesis; component of a signaling pathway that functions during egg chamber maturation. The chain is G protein-coupled receptor kinase 2 (Gprk2) from Drosophila melanogaster (Fruit fly).